The primary structure comprises 125 residues: Large ribosomal subunit protein bL19 (125 aa).

It belongs to the bacterial ribosomal protein bL19 family.

Its function is as follows. This protein is located at the 30S-50S ribosomal subunit interface and may play a role in the structure and function of the aminoacyl-tRNA binding site. The sequence is that of Large ribosomal subunit protein bL19 from Ehrlichia ruminantium (strain Gardel).